Consider the following 103-residue polypeptide: MFAVIRTGGKQYRVAKDDVLEVERNGGEAGDKIDLEVLMLGGEGGTLKVGAPLVDGAKVKAEIVEHTRGPKITIFKKRRRQNYRRKNGHRQDLMLVKILDIAG.

This sequence belongs to the bacterial ribosomal protein bL21 family. Part of the 50S ribosomal subunit. Contacts protein L20.

Functionally, this protein binds to 23S rRNA in the presence of protein L20. This is Large ribosomal subunit protein bL21 from Parvibaculum lavamentivorans (strain DS-1 / DSM 13023 / NCIMB 13966).